The sequence spans 432 residues: Short/branched chain specific acyl-CoA dehydrogenase, mitochondrial (432 aa).

The N-terminal 33 residues, 1–33 (MAVSAFQLWRAGGLLRRNFLTHSSSWKIPPRVL), are a transit peptide targeting the mitochondrion. N6-acetyllysine; alternate is present on Lys-70. Lys-70 bears the N6-succinyllysine; alternate mark. Residues 174-183 (FCLSEAGAGS) and 207-209 (WIS) each bind FAD. Substrate is bound at residue Ser-183. Ser-183 carries the post-translational modification Phosphoserine. Tyr-229 provides a ligand contact to substrate. Lys-278 carries the post-translational modification N6-succinyllysine. A substrate-binding site is contributed by Tyr-283. At Lys-284 the chain carries N6-acetyllysine; alternate. Lys-284 is modified (N6-succinyllysine; alternate). Substrate is bound at residue 291-294 (NEGR). FAD contacts are provided by residues Arg-319, Gln-330, and 387 to 391 (EWMGG). Residue Glu-414 is the Proton acceptor of the active site. FAD is bound at residue 416–418 (TSN). An N6-acetyllysine modification is found at Lys-426.

Belongs to the acyl-CoA dehydrogenase family. Homotetramer. Requires FAD as cofactor. As to expression, ubiquitously expressed.

The protein resides in the mitochondrion matrix. The catalysed reaction is 2-methylbutanoyl-CoA + oxidized [electron-transfer flavoprotein] + H(+) = (2E)-2-methylbut-2-enoyl-CoA + reduced [electron-transfer flavoprotein]. The enzyme catalyses (2S)-2-methylbutanoyl-CoA + oxidized [electron-transfer flavoprotein] + H(+) = (2E)-2-methylbut-2-enoyl-CoA + reduced [electron-transfer flavoprotein]. It carries out the reaction (2R)-2-methylbutanoyl-CoA + oxidized [electron-transfer flavoprotein] + H(+) = ethylacryloyl-CoA + reduced [electron-transfer flavoprotein]. It catalyses the reaction butanoyl-CoA + oxidized [electron-transfer flavoprotein] + H(+) = (2E)-butenoyl-CoA + reduced [electron-transfer flavoprotein]. The catalysed reaction is 2-methylpropanoyl-CoA + oxidized [electron-transfer flavoprotein] + H(+) = 2-methylpropenoyl-CoA + reduced [electron-transfer flavoprotein]. The enzyme catalyses hexanoyl-CoA + oxidized [electron-transfer flavoprotein] + H(+) = (2E)-hexenoyl-CoA + reduced [electron-transfer flavoprotein]. It carries out the reaction valproyl-CoA + oxidized [electron-transfer flavoprotein] + H(+) = (2E)-2-propylpent-2-enoyl-CoA + reduced [electron-transfer flavoprotein]. It functions in the pathway lipid metabolism; mitochondrial fatty acid beta-oxidation. The protein operates within amino-acid degradation; L-isoleucine degradation. Inhibited by N-ethylmaleimide, hydroxymercuribenzoate, methyl mercury iodide and heavy metals such as Hg2+, Cu2+, and Ag2+. Functionally, short and branched chain specific acyl-CoA dehydrogenase that catalyzes the removal of one hydrogen from C-2 and C-3 of the fatty acyl-CoA thioester, resulting in the formation of trans-2-enoyl-CoA. Among the different mitochondrial acyl-CoA dehydrogenases, acts specifically on short and branched chain acyl-CoA derivatives such as (S)-2-methylbutyryl-CoA as well as short straight chain acyl-CoAs such as butyryl-CoA. Plays an important role in the metabolism of L-isoleucine by catalyzing the dehydrogenation of 2-methylbutyryl-CoA, one of the steps of the L-isoleucine catabolic pathway. Can also act on valproyl-CoA, a metabolite of the valproic acid drug. The polypeptide is Short/branched chain specific acyl-CoA dehydrogenase, mitochondrial (Rattus norvegicus (Rat)).